The chain runs to 167 residues: Crossover junction endodeoxyribonuclease RuvC (167 aa).

Active-site residues include Asp11, Glu71, and Asp143. Residues Asp11, Glu71, and Asp143 each coordinate Mg(2+).

The protein belongs to the RuvC family. In terms of assembly, homodimer which binds Holliday junction (HJ) DNA. The HJ becomes 2-fold symmetrical on binding to RuvC with unstacked arms; it has a different conformation from HJ DNA in complex with RuvA. In the full resolvosome a probable DNA-RuvA(4)-RuvB(12)-RuvC(2) complex forms which resolves the HJ. Requires Mg(2+) as cofactor.

It is found in the cytoplasm. It catalyses the reaction Endonucleolytic cleavage at a junction such as a reciprocal single-stranded crossover between two homologous DNA duplexes (Holliday junction).. Its function is as follows. The RuvA-RuvB-RuvC complex processes Holliday junction (HJ) DNA during genetic recombination and DNA repair. Endonuclease that resolves HJ intermediates. Cleaves cruciform DNA by making single-stranded nicks across the HJ at symmetrical positions within the homologous arms, yielding a 5'-phosphate and a 3'-hydroxyl group; requires a central core of homology in the junction. The consensus cleavage sequence is 5'-(A/T)TT(C/G)-3'. Cleavage occurs on the 3'-side of the TT dinucleotide at the point of strand exchange. HJ branch migration catalyzed by RuvA-RuvB allows RuvC to scan DNA until it finds its consensus sequence, where it cleaves and resolves the cruciform DNA. The polypeptide is Crossover junction endodeoxyribonuclease RuvC (Bartonella bacilliformis (strain ATCC 35685 / KC583 / Herrer 020/F12,63)).